A 450-amino-acid polypeptide reads, in one-letter code: Probable helicase D10 (450 aa).

A Helicase ATP-binding domain is found at 95–240 (PIYEECDDTC…MFKDFFGYKI (146 aa)). 108–115 (GKPGFGKT) is a binding site for ATP. The DEAH box signature appears at 193–196 (DEVH). The region spanning 289–439 (NLAHLYVNMG…TITMTPEKAV (151 aa)) is the Helicase C-terminal domain.

It carries out the reaction ATP + H2O = ADP + phosphate + H(+). This Escherichia phage T5 (Enterobacteria phage T5) protein is Probable helicase D10 (D10).